The chain runs to 59 residues: Large ribosomal subunit protein uL30 (59 aa).

The protein belongs to the universal ribosomal protein uL30 family. As to quaternary structure, part of the 50S ribosomal subunit.

This chain is Large ribosomal subunit protein uL30, found in Photobacterium profundum (strain SS9).